Consider the following 112-residue polypeptide: uncharacterized protein (112 aa).

Positions 5–112 (IFQKIIKGII…LLGGKKLNKI (108 aa)) constitute an HIT domain. Positions 98–102 (HLHLH) match the Histidine triad motif motif.

This is an uncharacterized protein from Buchnera aphidicola subsp. Baizongia pistaciae (strain Bp).